The chain runs to 67 residues: Beta-defensin 103A (67 aa).

An N-terminal signal peptide occupies residues 1 to 22 (MRIHFLLFALLFLFLMPVPGNG). 3 disulfides stabilise this stretch: Cys-33/Cys-62, Cys-40/Cys-55, and Cys-45/Cys-63.

This sequence belongs to the beta-defensin family.

It is found in the secreted. In terms of biological role, exhibits antimicrobial activity against Gram-positive and Gram-negative bacteria. The chain is Beta-defensin 103A (DEFB103A) from Equus caballus (Horse).